Consider the following 79-residue polypeptide: U-actitoxin-Oulsp1 (79 aa).

The first 21 residues, 1-21 (MNTKLVVVFLLSAILFVSVTA), serve as a signal peptide directing secretion. Positions 22 to 43 (SRPGKDLERDEAYETYDDENKR) are excised as a propeptide. In terms of domain architecture, ShKT spans 45-79 (CKDVFPAATCRHAKSVGNCSSEKYKRNCAITCGAC). 3 disulfides stabilise this stretch: cysteine 45-cysteine 79, cysteine 54-cysteine 72, and cysteine 63-cysteine 76. The segment at 67–68 (KY) is crucial for binding to potassium channels.

Belongs to the sea anemone type 1 potassium channel toxin family. Type 1b subfamily. Two similar peptides (OspTx2a-p1 and -p2) are obtained after synthesis and oxidative folding. They may differ by a D-Cys at position 76 (corresponding to OspTx2a-p2). Since C-terminal Cys residues are prone to racemization during solid-phase peptide synthesis, and if the presence of a D-amino acid is correct, it is probable that OspTx2a-p1 (L-Cys-76 form) corresponds to the native peptide.

It is found in the secreted. In terms of biological role, toxin that weakly blocks the two voltage-gated potassium channels on Kv1.2/KCNA2 (IC(50)=1.8-2.5 uM) and Kv1.6/KCNA6 (IC(50)=5.6-6.2 uM). The chain is U-actitoxin-Oulsp1 from Oulactis sp. (Sea anemone).